We begin with the raw amino-acid sequence, 1699 residues long: Eukaryotic translation initiation factor 2-alpha kinase gcn-2 (1699 aa).

Residues 22 to 138 (EEKLALDAVY…HRVREFLTDH (117 aa)) enclose the RWD domain. 2 Protein kinase domains span residues 108–507 (LTIL…DVVL) and 508–999 (VRNK…DEDL). ATP-binding positions include 114–122 (MADTWEGCV), lysine 154, 497–505 (LGRGGFGDV), and lysine 520. Disordered stretches follow at residues 572–615 (DSSL…SLMP) and 632–725 (KEWS…SVFE). A compositionally biased stretch (acidic residues) spans 669–706 (SSDDEDDDDSSEIDWDAESEEVEDEESDDSDEEDEDDG). Over residues 711–720 (QLNTETSTGA) the composition is skewed to polar residues. Residue aspartate 829 is the Proton acceptor of the active site.

It belongs to the protein kinase superfamily. Ser/Thr protein kinase family. GCN2 subfamily.

It carries out the reaction L-seryl-[protein] + ATP = O-phospho-L-seryl-[protein] + ADP + H(+). The enzyme catalyses L-threonyl-[protein] + ATP = O-phospho-L-threonyl-[protein] + ADP + H(+). Its function is as follows. Serine/threonine-protein kinase which phosphorylates the alpha subunit of eukaryotic translation-initiation factor 2 (eIF2alpha), leading to its inactivation and thus to a rapid reduction of translational initiation and repression of global protein synthesis. Involved in the unfolded protein response (UPR) triggered by several stresses including mitochondrial, osmotic and oxidative stresses, amino acid deprivation and UV irradiation, probably by phosphorylating and inhibiting eIF2alpha. In addition, leads to the selective translation/transcription of some mRNA including atf-5, pha-4 and gpdh-1 which are part of the UPR. Required for maintaining lifespan during amino acid starvation. Involved in hypoxia-mediated adaptive protective response. The protein is Eukaryotic translation initiation factor 2-alpha kinase gcn-2 of Caenorhabditis elegans.